We begin with the raw amino-acid sequence, 338 residues long: 1-aminocyclopropane-1-carboxylate deaminase (338 aa).

N6-(pyridoxal phosphate)lysine is present on Lys51. The Nucleophile role is filled by Ser78.

Belongs to the ACC deaminase/D-cysteine desulfhydrase family. In terms of assembly, homotrimer. Pyridoxal 5'-phosphate is required as a cofactor.

It carries out the reaction 1-aminocyclopropane-1-carboxylate + H2O = 2-oxobutanoate + NH4(+). Its function is as follows. Catalyzes a cyclopropane ring-opening reaction, the irreversible conversion of 1-aminocyclopropane-1-carboxylate (ACC) to ammonia and alpha-ketobutyrate. Allows growth on ACC as a nitrogen source. The polypeptide is 1-aminocyclopropane-1-carboxylate deaminase (Burkholderia lata (strain ATCC 17760 / DSM 23089 / LMG 22485 / NCIMB 9086 / R18194 / 383)).